The following is a 482-amino-acid chain: tRNA sulfurtransferase (482 aa).

In terms of domain architecture, THUMP spans 61–165; the sequence is LAIRDALTRI…DDRLLLIKGR (105 aa). ATP-binding positions include 183–184, Lys265, Gly287, and Gln296; that span reads LI. A disulfide bond links Cys344 and Cys456. Positions 404–482 constitute a Rhodanese domain; sequence FGPNDVILDI…GFNNVKVYRP (79 aa). Catalysis depends on Cys456, which acts as the Cysteine persulfide intermediate.

Belongs to the ThiI family.

It is found in the cytoplasm. The catalysed reaction is [ThiI sulfur-carrier protein]-S-sulfanyl-L-cysteine + a uridine in tRNA + 2 reduced [2Fe-2S]-[ferredoxin] + ATP + H(+) = [ThiI sulfur-carrier protein]-L-cysteine + a 4-thiouridine in tRNA + 2 oxidized [2Fe-2S]-[ferredoxin] + AMP + diphosphate. It catalyses the reaction [ThiS sulfur-carrier protein]-C-terminal Gly-Gly-AMP + S-sulfanyl-L-cysteinyl-[cysteine desulfurase] + AH2 = [ThiS sulfur-carrier protein]-C-terminal-Gly-aminoethanethioate + L-cysteinyl-[cysteine desulfurase] + A + AMP + 2 H(+). It functions in the pathway cofactor biosynthesis; thiamine diphosphate biosynthesis. Its function is as follows. Catalyzes the ATP-dependent transfer of a sulfur to tRNA to produce 4-thiouridine in position 8 of tRNAs, which functions as a near-UV photosensor. Also catalyzes the transfer of sulfur to the sulfur carrier protein ThiS, forming ThiS-thiocarboxylate. This is a step in the synthesis of thiazole, in the thiamine biosynthesis pathway. The sulfur is donated as persulfide by IscS. The sequence is that of tRNA sulfurtransferase from Shigella sonnei (strain Ss046).